The chain runs to 153 residues: Histone H2B.3 (153 aa).

Basic and acidic residues-rich tracts occupy residues 1–28 and 36–53; these read MAPKAEKKPAAKKPAEEEPAAEKAEKAL and EKRLPAGKAEKGSGEGRK. The interval 1–61 is disordered; the sequence is MAPKAEKKPA…RKAGRKKAKK (61 aa). N6-acetyllysine is present on residues Lys-7 and Lys-37. Residue Lys-149 forms a Glycyl lysine isopeptide (Lys-Gly) (interchain with G-Cter in ubiquitin) linkage.

This sequence belongs to the histone H2B family. As to quaternary structure, the nucleosome is a histone octamer containing two molecules each of H2A, H2B, H3 and H4 assembled in one H3-H4 heterotetramer and two H2A-H2B heterodimers. The octamer wraps approximately 147 bp of DNA. Can be acetylated to form H2BK6ac and H2BK33ac. In terms of processing, monoubiquitinated by BRE1 to form H2BK143ub1 and deubiquitinated by UBP26. Required for heterochromatic histone H3 di- and trimethylation at H3K4me. May give a specific tag for epigenetic transcriptional activation.

It localises to the nucleus. Its subcellular location is the chromosome. Core component of nucleosome. Nucleosomes wrap and compact DNA into chromatin, limiting DNA accessibility to the cellular machineries which require DNA as a template. Histones thereby play a central role in transcription regulation, DNA repair, DNA replication and chromosomal stability. DNA accessibility is regulated via a complex set of post-translational modifications of histones, also called histone code, and nucleosome remodeling. The sequence is that of Histone H2B.3 (H2B.3) from Oryza sativa subsp. indica (Rice).